The following is a 283-amino-acid chain: Adenylate kinase 2, chloroplastic (283 aa).

The N-terminal 59 residues, 1-59, are a transit peptide targeting the chloroplast; the sequence is MTGCVNSISPPPVTLYRHRASPSRSSFSLSGDALHSLYRHRRVSRSPSIIAPKFQIVAA. 74-79 is an ATP binding site; it reads ASGKGT. The segment at 94-123 is NMP; it reads SAGDLLRAEIASGSENGRRAKEHMEKGQLV. AMP is bound by residues Arg100, 121–123, 150–153, and Gln157; these read QLV and GYPR. The tract at residues 187–220 is LID; it reads GRRLDPVTGKIYHLKYSPPETEEIAVRLTQRFDD. An ATP-binding site is contributed by Arg188. AMP-binding residues include Arg217 and Arg228.

It belongs to the adenylate kinase family. As to quaternary structure, monomer.

It localises to the plastid. Its subcellular location is the chloroplast stroma. It carries out the reaction AMP + ATP = 2 ADP. Catalyzes the reversible transfer of the terminal phosphate group between ATP and AMP. Plays an important role in cellular energy homeostasis and in adenine nucleotide metabolism. Plays a major role in the equilibration of adenylates and de novo synthesis of ADP in the plastid stroma. The polypeptide is Adenylate kinase 2, chloroplastic (Arabidopsis thaliana (Mouse-ear cress)).